The chain runs to 318 residues: Olfactory receptor-like protein COR1 (318 aa).

Topologically, residues 1–26 (MASGNCTTPTTFILSGLTDNPGLQMP) are extracellular. N-linked (GlcNAc...) asparagine glycosylation occurs at asparagine 5. A helical transmembrane segment spans residues 27–49 (LFMVFLAIYTITLLTNLGLIALI). The Cytoplasmic portion of the chain corresponds to 50 to 57 (SVDLHLQT). A helical membrane pass occupies residues 58–79 (PMYIFLQNLSFTDAAYSTVITP). The Extracellular portion of the chain corresponds to 80–100 (KMLATFLEERKTISYVGCILQ). A disulfide bond links cysteine 97 and cysteine 179. The helical transmembrane segment at 101-120 (YFSFVLLTVTESLLLAVMAY) threads the bilayer. At 121–139 (DRYVAICKPLLYPSIMTKA) the chain is on the cytoplasmic side. A helical membrane pass occupies residues 140 to 164 (VCWRLVESLYFLAFLNSLVHTSGLL). The Extracellular portion of the chain corresponds to 165–205 (KLSFCYSNVVNHFFCDISPLFQISSSSIAISELLVIISGSL). The chain crosses the membrane as a helical span at residues 206-226 (FVMSSIIIILISYVFIILTVV). Topologically, residues 227–239 (MIRSKDGKYKAFS) are cytoplasmic. A helical transmembrane segment spans residues 240-260 (TCTSHLMAVSLFHGTVIFMYL). At 261–271 (RPVKLFSLDTD) the chain is on the extracellular side. A helical transmembrane segment spans residues 272-292 (KIASLFYTVVIPMLNPLIYSW). The Cytoplasmic portion of the chain corresponds to 293-318 (RNKEVKDALRRLTATTFGFIDSKAVQ).

The protein belongs to the G-protein coupled receptor 1 family.

The protein resides in the cell membrane. Functionally, odorant receptor. The sequence is that of Olfactory receptor-like protein COR1 (COR1) from Gallus gallus (Chicken).